We begin with the raw amino-acid sequence, 1687 residues long: A-kinase anchor protein SPHKAP (1687 aa).

Over residues 1 to 14 (MDVNSRLSVQSNVE) the composition is skewed to polar residues. 2 disordered regions span residues 1–25 (MDVNSRLSVQSNVESPLMHEGPEPQ) and 272–293 (RKHRTPSTKTEGSKENTEENTS). Positions 914–931 (FAEELAETVVSMATEIAA) are PKA-RII subunit binding domain. Residues 964–989 (LKRKKENSSAGSTVRKHKPPRLSEIK) form a disordered region. 8 positions are modified to phosphoserine: S1010, S1070, S1092, S1105, S1106, S1109, S1244, and S1273. 2 disordered regions span residues 1363 to 1406 (VTEG…SPRR) and 1421 to 1520 (DQKE…PDDT). Residues 1366 to 1375 (GNHSPVSSPG) are compositionally biased toward polar residues. Positions 1382 to 1393 (KPSDFDPRRETS) are enriched in basic and acidic residues. Positions 1461–1470 (TAPSTCQSSR) are enriched in polar residues. Positions 1482–1494 (EVLKEDIPRDESR) are enriched in basic and acidic residues. Low complexity predominate over residues 1495–1508 (NPPSSSEESTGSWS).

The protein belongs to the AKAP110 family. Interacts (via the PKA-RII subunit binding domain) with the RI subunit of PKA. Interacts with SPHK1; the interaction greatly reduces SPHK1 activity.

It is found in the cytoplasm. Anchoring protein that binds preferentially to the type I regulatory subunit of c-AMP-dependent protein kinase (PKA type I) and targets it to distinct subcellular compartments. May act as a converging factor linking cAMP and sphingosine signaling pathways. Plays a regulatory role in the modulation of SPHK1. This Mus musculus (Mouse) protein is A-kinase anchor protein SPHKAP (Sphkap).